Reading from the N-terminus, the 153-residue chain is SsrA-binding protein (153 aa).

Belongs to the SmpB family.

It localises to the cytoplasm. Functionally, required for rescue of stalled ribosomes mediated by trans-translation. Binds to transfer-messenger RNA (tmRNA), required for stable association of tmRNA with ribosomes. tmRNA and SmpB together mimic tRNA shape, replacing the anticodon stem-loop with SmpB. tmRNA is encoded by the ssrA gene; the 2 termini fold to resemble tRNA(Ala) and it encodes a 'tag peptide', a short internal open reading frame. During trans-translation Ala-aminoacylated tmRNA acts like a tRNA, entering the A-site of stalled ribosomes, displacing the stalled mRNA. The ribosome then switches to translate the ORF on the tmRNA; the nascent peptide is terminated with the 'tag peptide' encoded by the tmRNA and targeted for degradation. The ribosome is freed to recommence translation, which seems to be the essential function of trans-translation. The protein is SsrA-binding protein of Desulforudis audaxviator (strain MP104C).